The following is a 309-amino-acid chain: Vomeronasal type-1 receptor 52 (309 aa).

The Extracellular portion of the chain corresponds to 1–19 (MNKDHTLYCSVYIRNAFFS). Residues 20 to 40 (EIGIGISANSCLLLFHTFMFI) form a helical membrane-spanning segment. Over 41–49 (RGHRPRLTD) the chain is Cytoplasmic. The chain crosses the membrane as a helical span at residues 50 to 70 (LPIGFVALIHLVMLLLAAYIT). Over 71–93 (EDFFMSSGGWDDITCKLVIFLHR) the chain is Extracellular. A disulfide bridge connects residues C85 and C172. A helical membrane pass occupies residues 94-114 (FFRSLSVCATCLLSVFQAIIL). Residues 115-134 (CPQSSHLAKLKQNSPHQLSY) lie on the Cytoplasmic side of the membrane. Residues 135–155 (FFIFLSIFYTSISSHILIAAI) form a helical membrane-spanning segment. Topologically, residues 156–187 (PTQNITFVNLIYITNSCSFLPLSSSMQHTFST) are extracellular. Residue N159 is glycosylated (N-linked (GlcNAc...) asparagine). A helical transmembrane segment spans residues 188–208 (LLAFRNVFVIGLMGLSTCYMA). Topologically, residues 209–238 (TLLCRHKTRSQRLQNSKLSPKATPEQRALR) are cytoplasmic. The helical transmembrane segment at 239–259 (TILMLMSFFLLMSTFDSIISY) threads the bilayer. Residues 260-268 (SRTILQGNP) lie on the Extracellular side of the membrane. A helical membrane pass occupies residues 269 to 289 (LPFCFQILVAHSYAAVSPLLV). Residues 290–309 (LSNEKRITNLLISMYEKIVL) lie on the Cytoplasmic side of the membrane.

Belongs to the G-protein coupled receptor 1 family.

It localises to the cell membrane. In terms of biological role, putative pheromone receptor implicated in the regulation of social and reproductive behavior. The protein is Vomeronasal type-1 receptor 52 (Vmn1r52) of Mus musculus (Mouse).